Here is a 456-residue protein sequence, read N- to C-terminus: Ribosomal RNA small subunit methyltransferase F (456 aa).

S-adenosyl-L-methionine-binding positions include 109–115, Glu-133, Arg-138, and Asp-177; that span reads AAAPGGK. Catalysis depends on Cys-230, which acts as the Nucleophile.

It belongs to the class I-like SAM-binding methyltransferase superfamily. RsmB/NOP family.

It is found in the cytoplasm. It carries out the reaction cytidine(1400) in 16S rRNA + S-adenosyl-L-methionine = 5-methylcytidine(1400) in 16S rRNA + S-adenosyl-L-homocysteine + H(+). The enzyme catalyses cytidine(1404) in 16S rRNA + S-adenosyl-L-methionine = 5-methylcytidine(1404) in 16S rRNA + S-adenosyl-L-homocysteine + H(+). It catalyses the reaction cytidine(1407) in 16S rRNA + S-adenosyl-L-methionine = 5-methylcytidine(1407) in 16S rRNA + S-adenosyl-L-homocysteine + H(+). Its function is as follows. Specifically methylates the cytosines at positions 1400 (m5C1400), 1404 (m5C1404) and 1407 (m5C1407) of 16S rRNA. C1400, C1404 and C1407 are methylated in a 30S subunit substrate, but only C1400 and C1404 are methylated when naked 16S rRNA is the substrate. Methylation by RsmF may facilitate growth at temperatures outside the optimal growth temperature. The sequence is that of Ribosomal RNA small subunit methyltransferase F from Thermus thermophilus (strain ATCC 27634 / DSM 579 / HB8).